The chain runs to 187 residues: Adenylate kinase (187 aa).

10-15 (GSGKGT) contacts ATP. Positions 30–59 (STGDLLRAEVAAGSPLGVKAKEVMARGDLV) are NMP. Residues Thr31, Arg36, 57–59 (DLV), 85–88 (GYPR), and Gln92 each bind AMP. Positions 126–136 (GRAKAEGREDD) are LID. Position 127 (Arg127) interacts with ATP. The AMP site is built by Arg133 and Arg144. Gly172 lines the ATP pocket.

Belongs to the adenylate kinase family. Monomer.

Its subcellular location is the cytoplasm. It catalyses the reaction AMP + ATP = 2 ADP. Its pathway is purine metabolism; AMP biosynthesis via salvage pathway; AMP from ADP: step 1/1. Its function is as follows. Catalyzes the reversible transfer of the terminal phosphate group between ATP and AMP. Plays an important role in cellular energy homeostasis and in adenine nucleotide metabolism. The chain is Adenylate kinase from Xanthomonas campestris pv. campestris (strain B100).